The primary structure comprises 382 residues: SAT4 family membrane protein (382 aa).

The interval 1-22 is disordered; sequence MFGAELVGRETGGQSTDQPYSY. Residue Asn78 is glycosylated (N-linked (GlcNAc...) asparagine). The next 2 membrane-spanning stretches (helical) occupy residues 80–100 and 112–132; these read SQIL…LLYL and YLSI…NFFL. Asn147 carries N-linked (GlcNAc...) asparagine glycosylation. 3 helical membrane passes run 159–179, 192–212, and 228–248; these read ILVT…LPII, LGIS…IMRL, and WYTE…PTFF. Asn269 carries an N-linked (GlcNAc...) asparagine glycan.

Belongs to the SAT4 family.

It localises to the membrane. The chain is SAT4 family membrane protein from Emericella nidulans (strain FGSC A4 / ATCC 38163 / CBS 112.46 / NRRL 194 / M139) (Aspergillus nidulans).